The following is a 670-amino-acid chain: DNA ligase (670 aa).

NAD(+) is bound by residues 32 to 36 (DSEYD), 81 to 82 (SL), and glutamate 114. Lysine 116 acts as the N6-AMP-lysine intermediate in catalysis. NAD(+) contacts are provided by arginine 137, glutamate 174, lysine 291, and lysine 315. 4 residues coordinate Zn(2+): cysteine 409, cysteine 412, cysteine 427, and cysteine 433. One can recognise a BRCT domain in the interval 592 to 670 (ASENLFKDKT…EEEFLAQITR (79 aa)).

It belongs to the NAD-dependent DNA ligase family. LigA subfamily. Requires Mg(2+) as cofactor. The cofactor is Mn(2+).

The enzyme catalyses NAD(+) + (deoxyribonucleotide)n-3'-hydroxyl + 5'-phospho-(deoxyribonucleotide)m = (deoxyribonucleotide)n+m + AMP + beta-nicotinamide D-nucleotide.. In terms of biological role, DNA ligase that catalyzes the formation of phosphodiester linkages between 5'-phosphoryl and 3'-hydroxyl groups in double-stranded DNA using NAD as a coenzyme and as the energy source for the reaction. It is essential for DNA replication and repair of damaged DNA. The protein is DNA ligase of Haemophilus influenzae (strain PittEE).